The sequence spans 132 residues: Phosphoribosyl-AMP cyclohydrolase (132 aa).

Residue aspartate 82 participates in Mg(2+) binding. Residue cysteine 83 coordinates Zn(2+). The Mg(2+) site is built by aspartate 84 and aspartate 86. Residues cysteine 100 and cysteine 107 each contribute to the Zn(2+) site.

It belongs to the PRA-CH family. In terms of assembly, homodimer. Mg(2+) serves as cofactor. Requires Zn(2+) as cofactor.

The protein localises to the cytoplasm. It carries out the reaction 1-(5-phospho-beta-D-ribosyl)-5'-AMP + H2O = 1-(5-phospho-beta-D-ribosyl)-5-[(5-phospho-beta-D-ribosylamino)methylideneamino]imidazole-4-carboxamide. It functions in the pathway amino-acid biosynthesis; L-histidine biosynthesis; L-histidine from 5-phospho-alpha-D-ribose 1-diphosphate: step 3/9. Its function is as follows. Catalyzes the hydrolysis of the adenine ring of phosphoribosyl-AMP. The polypeptide is Phosphoribosyl-AMP cyclohydrolase (Dechloromonas aromatica (strain RCB)).